We begin with the raw amino-acid sequence, 150 residues long: Cell division protein SepF (150 aa).

This sequence belongs to the SepF family. As to quaternary structure, homodimer. Interacts with FtsZ.

Its subcellular location is the cytoplasm. In terms of biological role, cell division protein that is part of the divisome complex and is recruited early to the Z-ring. Probably stimulates Z-ring formation, perhaps through the cross-linking of FtsZ protofilaments. Its function overlaps with FtsA. The sequence is that of Cell division protein SepF from Clostridium kluyveri (strain NBRC 12016).